The sequence spans 538 residues: CTP synthase (538 aa).

Positions 1–270 (MSRTKFIFVT…DEVVLKTMGM (270 aa)) are amidoligase domain. Residue Ser15 participates in CTP binding. Position 15 (Ser15) interacts with UTP. An ATP-binding site is contributed by 16–21 (SLGKGV). Tyr56 lines the L-glutamine pocket. Asp73 contacts ATP. Mg(2+) contacts are provided by Asp73 and Glu143. Residues 150-152 (DIE), 190-195 (KTKPTQ), and Lys226 contribute to the CTP site. UTP is bound by residues 190–195 (KTKPTQ) and Lys226. Residues 295–537 (QIAVVGKYIS…IRASVKYSKK (243 aa)) form the Glutamine amidotransferase type-1 domain. Gly357 serves as a coordination point for L-glutamine. The active-site Nucleophile; for glutamine hydrolysis is Cys384. Residues 385–388 (LGMQ), Glu408, and Arg465 contribute to the L-glutamine site. Active-site residues include His510 and Glu512.

Belongs to the CTP synthase family. As to quaternary structure, homotetramer.

The catalysed reaction is UTP + L-glutamine + ATP + H2O = CTP + L-glutamate + ADP + phosphate + 2 H(+). The enzyme catalyses L-glutamine + H2O = L-glutamate + NH4(+). It carries out the reaction UTP + NH4(+) + ATP = CTP + ADP + phosphate + 2 H(+). The protein operates within pyrimidine metabolism; CTP biosynthesis via de novo pathway; CTP from UDP: step 2/2. Allosterically activated by GTP, when glutamine is the substrate; GTP has no effect on the reaction when ammonia is the substrate. The allosteric effector GTP functions by stabilizing the protein conformation that binds the tetrahedral intermediate(s) formed during glutamine hydrolysis. Inhibited by the product CTP, via allosteric rather than competitive inhibition. Functionally, catalyzes the ATP-dependent amination of UTP to CTP with either L-glutamine or ammonia as the source of nitrogen. Regulates intracellular CTP levels through interactions with the four ribonucleotide triphosphates. This chain is CTP synthase, found in Leptospira interrogans serogroup Icterohaemorrhagiae serovar copenhageni (strain Fiocruz L1-130).